The primary structure comprises 122 residues: Large ribosomal subunit protein uL14 (122 aa).

It belongs to the universal ribosomal protein uL14 family. As to quaternary structure, part of the 50S ribosomal subunit. Forms a cluster with proteins L3 and L19. In the 70S ribosome, L14 and L19 interact and together make contacts with the 16S rRNA in bridges B5 and B8.

Its function is as follows. Binds to 23S rRNA. Forms part of two intersubunit bridges in the 70S ribosome. The polypeptide is Large ribosomal subunit protein uL14 (Francisella philomiragia subsp. philomiragia (strain ATCC 25017 / CCUG 19701 / FSC 153 / O#319-036)).